We begin with the raw amino-acid sequence, 176 residues long: Translation initiation factor IF-3 (176 aa).

This sequence belongs to the IF-3 family. As to quaternary structure, monomer.

It localises to the cytoplasm. In terms of biological role, IF-3 binds to the 30S ribosomal subunit and shifts the equilibrium between 70S ribosomes and their 50S and 30S subunits in favor of the free subunits, thus enhancing the availability of 30S subunits on which protein synthesis initiation begins. The protein is Translation initiation factor IF-3 of Wolinella succinogenes (strain ATCC 29543 / DSM 1740 / CCUG 13145 / JCM 31913 / LMG 7466 / NCTC 11488 / FDC 602W) (Vibrio succinogenes).